The sequence spans 1264 residues: Protein fantom (1264 aa).

Coiled coils occupy residues Leu-64–Gln-143, Tyr-196–Thr-268, Leu-299–Ile-454, and Asn-488–Leu-555. 2 consecutive C2 domains span residues Lys-577–Thr-714 and Ala-773–Phe-897. 2 disordered regions span residues Asp-979–Lys-1018 and Gln-1047–Gln-1093. The span at Ser-1056–Asp-1080 shows a compositional bias: acidic residues.

Belongs to the RPGRIP1 family. As to quaternary structure, interacts with NPHP4 and NPHP1; NPHP1, NPHP4 and RPGRIP1L are proposed to form a functional NPHP1-4-8 module localized to cell-cell contacts and the ciliary transition zone; NPHP4 mediates the interaction between NPHP1 and RPGRIP1L. Interacts with IQCB1; the interaction likely requires additional interactors. Interacts with TBXA2R (via C-terminus), RPGR, NEK4. Interacts with NPHP4, INVS and DVL2; proposed to form a complex involved in DVL2 stabilization. Interacts with PSMD2. As to expression, ubiquitously expressed. Not found in heart and skin.

Its subcellular location is the cytoplasm. The protein resides in the cytoskeleton. It localises to the cilium basal body. It is found in the cilium axoneme. The protein localises to the microtubule organizing center. Its subcellular location is the centrosome. The protein resides in the cell junction. It localises to the tight junction. In terms of biological role, negatively regulates signaling through the G-protein coupled thromboxane A2 receptor (TBXA2R). May be involved in mechanisms like programmed cell death, craniofacial development, patterning of the limbs, and formation of the left-right axis. Involved in the organization of apical junctions; the function is proposed to implicate a NPHP1-4-8 module. Does not seem to be strictly required for ciliogenesis. Involved in establishment of planar cell polarity such as in cochlear sensory epithelium and is proposed to implicate stabilization of disheveled proteins. Involved in regulation of proteasomal activity at the primary cilium probably implicating association with PSDM2. This is Protein fantom (Rpgrip1l) from Mus musculus (Mouse).